Reading from the N-terminus, the 310-residue chain is 4-diphosphocytidyl-2-C-methyl-D-erythritol kinase (310 aa).

Lys-20 is a catalytic residue. 106–116 contacts ATP; the sequence is PMGGGLGGGSS. Asp-148 is an active-site residue.

The protein belongs to the GHMP kinase family. IspE subfamily. Homodimer.

The enzyme catalyses 4-CDP-2-C-methyl-D-erythritol + ATP = 4-CDP-2-C-methyl-D-erythritol 2-phosphate + ADP + H(+). Its pathway is isoprenoid biosynthesis; isopentenyl diphosphate biosynthesis via DXP pathway; isopentenyl diphosphate from 1-deoxy-D-xylulose 5-phosphate: step 3/6. Its function is as follows. Catalyzes the phosphorylation of the position 2 hydroxy group of 4-diphosphocytidyl-2C-methyl-D-erythritol. The sequence is that of 4-diphosphocytidyl-2-C-methyl-D-erythritol kinase from Yersinia pseudotuberculosis serotype O:3 (strain YPIII).